A 465-amino-acid chain; its full sequence is MVTLTFLLSAAYLLSGRVSAAPSSAGSKSCDTVDLGYQCSPATSHLWGQYSPFFSLEDELSVSSKLPKDCRITLVQVLSRHGARYPTSSKSKKYKKLVTAIQANATDFKGKFAFLKTYNYTLGADDLTPFGEQQLVNSGIKFYQRYKALARSVVPFIRASGSDRVIASGEKFIEGFQQAKLADPGATNRAAPAISVIIPESETFNNTLDHGVCTKFEASQLGDEVAANFTALFAPDIRARAEKHLPGVTLTDEDVVSLMDMCSFDTVARTSDASQLSPFCQLFTHNEWKKYNYLQSLGKYYGYGAGNPLGPAQGIGFTNELIARLTRSPVQDHTSTNSTLVSNPATFPLNATMYVDFSHDNSMVSIFFALGLYNGTEPLSRTSVESAKELDGYSASWVVPFGARAYFETMQCKSEKEPLVRALINDRVVPLHGCDVDKLGRCKLNDFVKGLSWARSGGNWGECFS.

Residues 1-26 (MVTLTFLLSAAYLLSGRVSAAPSSAG) form the signal peptide. A disulfide bond links Cys30 and Cys39. 6 residues coordinate 1D-myo-inositol hexakisphosphate: Gln49, Tyr50, Arg80, His81, Arg84, and Thr87. Cystine bridges form between Cys70–Cys412, Cys213–Cys463, Cys262–Cys280, and Cys434–Cys442. His81 functions as the Nucleophile in the catalytic mechanism. An N-linked (GlcNAc...) asparagine glycan is attached at Asn104. 1D-myo-inositol hexakisphosphate is bound at residue Arg164. N-linked (GlcNAc...) asparagine glycosylation occurs at Asn205. Asp209 contacts 1D-myo-inositol hexakisphosphate. A glycan (N-linked (GlcNAc...) asparagine) is linked at Asn228. Lys299 is a 1D-myo-inositol hexakisphosphate binding site. N-linked (GlcNAc...) asparagine glycosylation is found at Asn337 and Asn350. 1D-myo-inositol hexakisphosphate contacts are provided by His359 and Asp360. Residue Asn374 is glycosylated (N-linked (GlcNAc...) asparagine).

This sequence belongs to the histidine acid phosphatase family. As to quaternary structure, monomer.

The protein resides in the secreted. It carries out the reaction 1D-myo-inositol hexakisphosphate + H2O = 1D-myo-inositol 1,2,4,5,6-pentakisphosphate + phosphate. The catalysed reaction is 1D-myo-inositol 1,2,4,5,6-pentakisphosphate + H2O = 1D-myo-inositol 1,2,5,6-tetrakisphosphate + phosphate. The enzyme catalyses 1D-myo-inositol 1,2,5,6-tetrakisphosphate + H2O = 1D-myo-inositol 1,2,6-trisphosphate + phosphate. It catalyses the reaction 1D-myo-inositol 1,2,6-trisphosphate + H2O = 1D-myo-inositol 1,2-bisphosphate + phosphate. It carries out the reaction 1D-myo-inositol 1,2-bisphosphate + H2O = 1D-myo-inositol 2-phosphate + phosphate. Its function is as follows. Catalyzes the phosphate monoester hydrolysis of phytic acid (myo-inositol hexakisphosphate), which results in the stepwise formation of myo-inositol pentakis-, tetrakis-, tris-, bis-, and monophosphates, as well as the liberation of inorganic phosphate. Myo-inositol 2-monophosphate is the end product. Has a broad substrate specificity and is also able to dephosphorylate other classic acid phosphatase substrates such as p-nitrophenyl phosphate, phenyl phosphate, fructose 1,6-bisphosphate, fructose 6-phosphate, glucose 6-phosphate, ribose 5-phosphate, alpha-glycerophosphate, beta-glycerophosphate, 3-phosphoglycerate, phosphoenolpyruvate, as well as ADP and ATP. This Aspergillus fumigatus (strain ATCC MYA-4609 / CBS 101355 / FGSC A1100 / Af293) (Neosartorya fumigata) protein is Phytase A (phyA).